Here is a 218-residue protein sequence, read N- to C-terminus: Ras-related protein RabT2 (218 aa).

32–39 (GDYKTGKG) is a binding site for GTP. The Effector region motif lies at 54–61 (VSSIGVDF). Residues 80–84 (DANSC) and 140–143 (NKCD) each bind GTP. The residue at position 215 (C215) is a Cysteine methyl ester. A lipid anchor (S-geranylgeranyl cysteine) is attached at C215. The propeptide at 216–218 (NIL) is removed in mature form.

Belongs to the small GTPase superfamily. Rab family.

Its subcellular location is the cell membrane. This chain is Ras-related protein RabT2 (rabT2), found in Dictyostelium discoideum (Social amoeba).